Reading from the N-terminus, the 1187-residue chain is Serine/threonine-protein kinase SIK3 homolog (1187 aa).

Residues 1–15 (MAAVSSGAAAAAGIP) show a composition bias toward low complexity. The segment at 1 to 41 (MAAVSSGAAAAAGIPNPNPNRERPQQQQQQQPASAALHPVA) is disordered. The region spanning 59–310 (YEMERTIGKG…MEQICKNKWM (252 aa)) is the Protein kinase domain. ATP contacts are provided by residues 65-73 (IGKGNFAVV) and K88. The active-site Proton acceptor is D181. T214 carries the post-translational modification Phosphothreonine. S218 is subject to Phosphoserine. One can recognise a UBA domain in the interval 337–377 (LINEQVLMAMAEMGFDRERTLQSLHADSYDHYSATYSLLSD). Disordered stretches follow at residues 548–587 (LKRP…VQRS), 697–776 (IQPS…PPGS), and 1060–1092 (CADA…GALQ). The segment covering 570-581 (VDEEGSDAEPDP) has biased composition (acidic residues). The span at 739–749 (VQYQHGSALYQ) shows a compositional bias: polar residues.

Belongs to the protein kinase superfamily. CAMK Ser/Thr protein kinase family. SNF1 subfamily. It depends on Mg(2+) as a cofactor.

The catalysed reaction is L-seryl-[protein] + ATP = O-phospho-L-seryl-[protein] + ADP + H(+). The enzyme catalyses L-threonyl-[protein] + ATP = O-phospho-L-threonyl-[protein] + ADP + H(+). In Danio rerio (Zebrafish), this protein is Serine/threonine-protein kinase SIK3 homolog.